Reading from the N-terminus, the 365-residue chain is Putative carbonic anhydrase-like protein 1 (365 aa).

An N-terminal signal peptide occupies residues 1-25; that stretch reads MRFECSHFPLFLIILTCHISPLKSS. Residues 28–356 enclose the Alpha-carbonic anhydrase domain; the sequence is YQWSYDSDVF…TNNRLVRTNI (329 aa). Y223 is a catalytic residue. Substrate contacts are provided by residues T295 and 295–296; that span reads TS.

This sequence belongs to the alpha-carbonic anhydrase family.

The protein localises to the secreted. This Caenorhabditis elegans protein is Putative carbonic anhydrase-like protein 1 (cah-1).